A 427-amino-acid polypeptide reads, in one-letter code: Imidazolonepropionase (427 aa).

Positions 78 and 80 each coordinate Fe(3+). Residues H78 and H80 each coordinate Zn(2+). The 4-imidazolone-5-propanoate site is built by R87, Y150, and H183. Y150 is a binding site for N-formimidoyl-L-glutamate. H255 is a binding site for Fe(3+). Residue H255 participates in Zn(2+) binding. E258 serves as a coordination point for 4-imidazolone-5-propanoate. D330 lines the Fe(3+) pocket. Position 330 (D330) interacts with Zn(2+). 2 residues coordinate N-formimidoyl-L-glutamate: N332 and G334. T335 provides a ligand contact to 4-imidazolone-5-propanoate.

Belongs to the metallo-dependent hydrolases superfamily. HutI family. Zn(2+) serves as cofactor. Fe(3+) is required as a cofactor.

The protein localises to the cytoplasm. The enzyme catalyses 4-imidazolone-5-propanoate + H2O = N-formimidoyl-L-glutamate. Its pathway is amino-acid degradation; L-histidine degradation into L-glutamate; N-formimidoyl-L-glutamate from L-histidine: step 3/3. Catalyzes the hydrolytic cleavage of the carbon-nitrogen bond in imidazolone-5-propanoate to yield N-formimidoyl-L-glutamate. It is the third step in the universal histidine degradation pathway. This chain is Imidazolonepropionase, found in Herpetosiphon aurantiacus (strain ATCC 23779 / DSM 785 / 114-95).